Here is a 304-residue protein sequence, read N- to C-terminus: Putative metal ion transporter ZIPCO (304 aa).

The next 8 helical transmembrane spans lie at 1–21, 46–66, 74–94, 158–178, 183–203, 218–238, 243–263, and 275–295; these read MWLK…VIYL, VASG…VIGL, IYCC…TDIL, FFIV…IGSL, PIII…LMIY, IYAW…VLSF, FVEI…SFNM, and FYIS…MIVF.

The protein resides in the cell membrane. Putative transporter for the divalent zinc and iron cations. Required for the development of liver-stage parasites. This Plasmodium berghei (strain Anka) protein is Putative metal ion transporter ZIPCO.